The following is a 620-amino-acid chain: Sterile alpha motif domain-containing protein 15 (620 aa).

The segment at 1 to 394 (MSEVSGDYNS…PNYPAGKDKL (394 aa)) is disordered. 3 stretches are compositionally biased toward basic and acidic residues: residues 62–83 (TRTR…DLQR), 106–125 (IDPE…KSVE), and 135–180 (TKSE…HFKS). A compositionally biased stretch (polar residues) spans 181–191 (TEQSGTEQPEQ). A compositionally biased stretch (basic residues) spans 233–242 (RPLKASKKAQ). The span at 261–270 (LLDDQEETQE) shows a compositional bias: acidic residues. 4 stretches are compositionally biased toward basic and acidic residues: residues 271–286 (ESIK…DRKP), 295–315 (KSSE…DKDP), 323–337 (FPKE…KTGD), and 347–382 (IQEK…KPES). An SAM domain is found at 480–543 (WSPERVAEWI…SYHTRVLLGI (64 aa)). A compositionally biased stretch (basic and acidic residues) spans 594–604 (EIKAEEKKEDA). The interval 594-620 (EIKAEEKKEDALPENSLEENEELYEAT) is disordered. Over residues 609 to 620 (SLEENEELYEAT) the composition is skewed to acidic residues.

This is Sterile alpha motif domain-containing protein 15 (Samd15) from Mus musculus (Mouse).